Reading from the N-terminus, the 392-residue chain is 8-amino-7-oxononanoate synthase 1 (392 aa).

109-110 (GF) provides a ligand contact to pyridoxal 5'-phosphate. His-134 is a binding site for substrate. Residues Ser-181, 206 to 209 (DDAH), and 237 to 240 (TLSK) contribute to the pyridoxal 5'-phosphate site. Lys-240 carries the N6-(pyridoxal phosphate)lysine modification. Position 354 (Thr-354) interacts with substrate.

It belongs to the class-II pyridoxal-phosphate-dependent aminotransferase family. BioF subfamily. Homodimer. Requires pyridoxal 5'-phosphate as cofactor.

The enzyme catalyses 6-carboxyhexanoyl-[ACP] + L-alanine + H(+) = (8S)-8-amino-7-oxononanoate + holo-[ACP] + CO2. It participates in cofactor biosynthesis; biotin biosynthesis. Functionally, catalyzes the decarboxylative condensation of pimeloyl-[acyl-carrier protein] and L-alanine to produce 8-amino-7-oxononanoate (AON), [acyl-carrier protein], and carbon dioxide. The sequence is that of 8-amino-7-oxononanoate synthase 1 (kbl) from Bacillus subtilis (strain 168).